Here is a 164-residue protein sequence, read N- to C-terminus: Peptidyl-prolyl cis-trans isomerase B (164 aa).

The 162-residue stretch at 1–162 (MVTFHTNHGD…EDVIIESVTV (162 aa)) folds into the PPIase cyclophilin-type domain.

It belongs to the cyclophilin-type PPIase family.

The protein localises to the cytoplasm. The catalysed reaction is [protein]-peptidylproline (omega=180) = [protein]-peptidylproline (omega=0). Inhibition by cyclosporin A with a Ki of 25 to 50 mu-mol, a concentration 1000-fold higher than that required for eukaryotic PPIases. Its function is as follows. PPIases accelerate the folding of proteins. It catalyzes the cis-trans isomerization of proline imidic peptide bonds in oligopeptides. This Escherichia coli (strain K12) protein is Peptidyl-prolyl cis-trans isomerase B (ppiB).